A 322-amino-acid polypeptide reads, in one-letter code: Probable cAMP-dependent protein kinase catalytic subunit (322 aa).

Positions 7–261 (FEFVKVVGVG…ICEIMGHPFF (255 aa)) constitute a Protein kinase domain. ATP contacts are provided by residues 13–21 (VGVGAFGKV) and Lys37. The Proton acceptor role is filled by Asp132. Residues 262 to 322 (KGIDWHEVES…KHLYKVSKGL (61 aa)) form the AGC-kinase C-terminal domain.

Belongs to the protein kinase superfamily. AGC Ser/Thr protein kinase family. cAMP subfamily.

The enzyme catalyses L-seryl-[protein] + ATP = O-phospho-L-seryl-[protein] + ADP + H(+). The catalysed reaction is L-threonyl-[protein] + ATP = O-phospho-L-threonyl-[protein] + ADP + H(+). The sequence is that of Probable cAMP-dependent protein kinase catalytic subunit from Encephalitozoon cuniculi (strain GB-M1) (Microsporidian parasite).